Consider the following 55-residue polypeptide: ATP synthase protein 8 (55 aa).

Residues 8-28 (WWIVNFSLIWASVLIVISLLL) form a helical membrane-spanning segment. The interval 34–55 (NSAGQSSSSLTLNKTTTNWQWL) is disordered. The segment covering 39–55 (SSSSLTLNKTTTNWQWL) has biased composition (low complexity).

The protein belongs to the ATPase protein 8 family. In terms of assembly, F-type ATPases have 2 components, CF(1) - the catalytic core - and CF(0) - the membrane proton channel.

It is found in the mitochondrion membrane. In terms of biological role, mitochondrial membrane ATP synthase (F(1)F(0) ATP synthase or Complex V) produces ATP from ADP in the presence of a proton gradient across the membrane which is generated by electron transport complexes of the respiratory chain. F-type ATPases consist of two structural domains, F(1) - containing the extramembraneous catalytic core and F(0) - containing the membrane proton channel, linked together by a central stalk and a peripheral stalk. During catalysis, ATP synthesis in the catalytic domain of F(1) is coupled via a rotary mechanism of the central stalk subunits to proton translocation. Part of the complex F(0) domain. Minor subunit located with subunit a in the membrane. This chain is ATP synthase protein 8 (MT-ATP8), found in Strongylocentrotus purpuratus (Purple sea urchin).